The sequence spans 484 residues: Transcription factor cghD (484 aa).

Positions 21–54 (CDRCRLQKLKCTVQSMESDGRMVCERCVRAKVPC) form a DNA-binding region, zn(2)-C6 fungal-type. Disordered stretches follow at residues 59-117 (RRRA…PTLA), 136-174 (TTAPTYSYHHHHHDSYQLGEGPPTPFPNPATTGGGSGSS), 202-242 (PAST…FSTT), and 386-406 (HMHSTPAPTTSPTLQLGELPS). The span at 64 to 76 (RPSDTKKQGDSST) shows a compositional bias: basic and acidic residues. The segment covering 77 to 107 (RRSTAPRTTNPEPTVLTPPLSTTSSTSEQTL) has biased composition (low complexity). Residues 202 to 213 (PASTSTSTGSPT) are compositionally biased toward low complexity.

The protein localises to the nucleus. Functionally, transcription factor that regulates the expression of the gene cluster that mediates the biosynthesis of the tetramic acid Sch210972, a potential anti-HIV fungal natural product that contains a decalin core. The sequence is that of Transcription factor cghD from Chaetomium globosum (strain ATCC 6205 / CBS 148.51 / DSM 1962 / NBRC 6347 / NRRL 1970) (Soil fungus).